We begin with the raw amino-acid sequence, 205 residues long: DNA-directed RNA polymerase subunit 5 (205 aa).

It belongs to the archaeal Rpo5/eukaryotic RPB5 RNA polymerase subunit family.

Its subcellular location is the virion. The enzyme catalyses RNA(n) + a ribonucleoside 5'-triphosphate = RNA(n+1) + diphosphate. Its function is as follows. DNA-dependent RNA polymerase catalyzes the transcription of DNA into RNA using the four ribonucleoside triphosphates as substrates. This Acanthamoeba polyphaga (Amoeba) protein is DNA-directed RNA polymerase subunit 5.